Reading from the N-terminus, the 546-residue chain is (-)-5-epieremophilene synthase STPS3 (546 aa).

The Mg(2+) site is built by Asp-299, Asp-303, Asp-442, Thr-446, and Glu-450. The DDXXD motif signature appears at 299 to 303 (DDTYD).

This sequence belongs to the terpene synthase family. Tpsa subfamily. As to quaternary structure, monomer. Requires Mg(2+) as cofactor. As to expression, highly expressed in flowers and at lower levels in leaves.

It catalyses the reaction (2E,6E)-farnesyl diphosphate = (-)-5-epi-eremophilene + diphosphate. It participates in secondary metabolite biosynthesis; terpenoid biosynthesis. In terms of biological role, sesquiterpene synthase that catalyzes the conversion of farnesyl diphosphate to (-)-5-epi-eremophilene. In Salvia miltiorrhiza (Chinese sage), this protein is (-)-5-epieremophilene synthase STPS3.